The primary structure comprises 222 residues: MIF4G domain-containing protein B (222 aa).

Residues 3-205 enclose the MIF4G domain; it reads NSSKEDYKIQ…LEILEFRAGG (203 aa).

Belongs to the MIF4GD family. Interacts with eif4g1, eif4g2 and slbp; probably tethered by SLBP to the 3'-end of mRNAs ending with the histone stem-loop, it also interacts with eif4g1 which is bound to their 5'-end.

The protein resides in the cytoplasm. Its subcellular location is the nucleus. In terms of biological role, functions in replication-dependent translation of histone mRNAs which differ from other eukaryotic mRNAs in that they do not end with a poly-A tail but a stem-loop. May participate in circularizing those mRNAs specifically enhancing their translation. The polypeptide is MIF4G domain-containing protein B (mif4gdb) (Danio rerio (Zebrafish)).